A 211-amino-acid chain; its full sequence is Regulator of G-protein signaling 2 (211 aa).

Residues 32–66 form a necessary for membrane association region; that stretch reads KMKRTLLKDWKTRLSYFLQNSSTPGKPKTGKKSKQ. A necessary to inhibit protein synthesis region spans residues 79–116; sequence LWAEAFDELLASKYGLAAFRAFLKSEFCEENIEFWLAC. Positions 83-199 constitute an RGS domain; the sequence is AFDELLASKY…LESEFYQDLC (117 aa).

As to quaternary structure, interacts with GNAQ. Does not interact with GNAI1 and GNAI3. Interacts with EIF2B5. Interacts with PRKG1 (isoform alpha). Post-translationally, phosphorylated by protein kinase C. Phosphorylation by PRKG1 leads to activation of RGS2 activity.

The protein localises to the cell membrane. The protein resides in the cytoplasm. Its subcellular location is the nucleus. It localises to the nucleolus. Its function is as follows. Regulates G protein-coupled receptor signaling cascades. Inhibits signal transduction by increasing the GTPase activity of G protein alpha subunits, thereby driving them into their inactive GDP-bound form. It is involved in the negative regulation of the angiotensin-activated signaling pathway. Plays a role in the regulation of blood pressure in response to signaling via G protein-coupled receptors and GNAQ. Plays a role in regulating the constriction and relaxation of vascular smooth muscle. Binds EIF2B5 and blocks its activity, thereby inhibiting the translation of mRNA into protein. The polypeptide is Regulator of G-protein signaling 2 (Rgs2) (Rattus norvegicus (Rat)).